Consider the following 3660-residue polypeptide: Dystrophin (3660 aa).

Residues 1 to 244 (MSAHVLWYEE…YVTSLFQVLP (244 aa)) form an actin-binding region. Calponin-homology (CH) domains follow at residues 19 to 123 (DVQK…LHWQ) and 138 to 244 (TNSE…QVLP). 22 Spectrin repeats span residues 341 to 449 (MDLD…NLHK), 450 to 558 (ILMD…LLQD), 561 to 669 (RKWQ…QVSQ), 721 to 830 (EIRK…WLEY), 832 to 936 (NSII…QLQT), 945 to 1047 (RYKD…KLED), 1050 to 1156 (TKLQ…ALKG), 1159 to 1265 (DKTV…TLEE), 1268 to 1369 (ACWH…SLEQ), 1470 to 1570 (EQRL…ELEK), 1573 to 1678 (KLSR…LLME), 1681 to 1782 (KHME…FIPL), 1879 to 1981 (HQWY…TVLE), 2013 to 2103 (LSEV…RFDK), 2106 to 2211 (EKWR…RIEE), 2214 to 2321 (NILS…EIEI), 2472 to 2574 (FNKA…QLHE), 2577 to 2683 (KDST…ALES), 2686 to 2799 (LMLQ…HLEA), 2802 to 2904 (DQWK…LRRQ), 2906 to 2928 (DDVRTEWDKLNLRSADWQKKIDD), and 2931 to 3037 (ERLQ…QLHE). Residues 3052–3085 (TSVQGPWERAISPNKVPYYINHETQTTCWDHPKM) enclose the WW domain. The segment at 3305–3361 (KHQAKCNICKECPIIGFRYRSLKHFNYDICQSCFFSGRVAKGHKMHYPMVEYCTPTT) adopts a ZZ-type; degenerate zinc-finger fold. Zn(2+) is bound by residues Cys-3310, Cys-3313, Cys-3334, and Cys-3337. 2 disordered regions span residues 3503–3526 (KQQHDHKGLSPLPSPPEMMPVSPQ) and 3575–3660 (PQAD…EATM). Polar residues-rich tracts occupy residues 3582–3601 (NGTTLSSPSTSLQRSDSSQP) and 3637–3647 (QLNNSFPSSRG).

It is found in the cell membrane. It localises to the sarcolemma. The protein resides in the cytoplasm. Its subcellular location is the cytoskeleton. The protein localises to the postsynaptic cell membrane. Functionally, may play a role in anchoring the cytoskeleton to the plasma membrane. The sequence is that of Dystrophin (DMD) from Gallus gallus (Chicken).